The chain runs to 553 residues: Dihydroxy-acid dehydratase (553 aa).

Residue aspartate 78 coordinates Mg(2+). Position 119 (cysteine 119) interacts with [2Fe-2S] cluster. Residues aspartate 120 and lysine 121 each coordinate Mg(2+). Lysine 121 bears the N6-carboxylysine mark. Cysteine 193 lines the [2Fe-2S] cluster pocket. Glutamate 441 is a Mg(2+) binding site. The Proton acceptor role is filled by serine 467.

The protein belongs to the IlvD/Edd family. In terms of assembly, homodimer. Requires [2Fe-2S] cluster as cofactor. The cofactor is Mg(2+).

The catalysed reaction is (2R)-2,3-dihydroxy-3-methylbutanoate = 3-methyl-2-oxobutanoate + H2O. It catalyses the reaction (2R,3R)-2,3-dihydroxy-3-methylpentanoate = (S)-3-methyl-2-oxopentanoate + H2O. It participates in amino-acid biosynthesis; L-isoleucine biosynthesis; L-isoleucine from 2-oxobutanoate: step 3/4. The protein operates within amino-acid biosynthesis; L-valine biosynthesis; L-valine from pyruvate: step 3/4. In terms of biological role, functions in the biosynthesis of branched-chain amino acids. Catalyzes the dehydration of (2R,3R)-2,3-dihydroxy-3-methylpentanoate (2,3-dihydroxy-3-methylvalerate) into 2-oxo-3-methylpentanoate (2-oxo-3-methylvalerate) and of (2R)-2,3-dihydroxy-3-methylbutanoate (2,3-dihydroxyisovalerate) into 2-oxo-3-methylbutanoate (2-oxoisovalerate), the penultimate precursor to L-isoleucine and L-valine, respectively. The polypeptide is Dihydroxy-acid dehydratase (Geobacter sp. (strain M21)).